The sequence spans 272 residues: MTRQWETLREYDEIKYEFFEGIAKVTINRPEVRNAFTPKTVAEMIDAFSRARDDQNVSVIVLTGEGDKAFCSGGDQKKRGHGGYVGEDDIPRLNVLDLQRLIRVIPKPVIAMVRGYAIGGGNVLNVVCDLTIAADNAIFGQTGPKVGSFDAGYGSGYLARIVGHKKAREIWYLCRQYNAQEALDMGLVNTVVPLEQVEDETVKWCKDIMQHSPTALRFLKAAMNADTDGLAGLQQMAGDATLLYYTTDEAKEGRDAFKEKRNPDFDQFPKFP.

Substrate-binding positions include R33, 72–76 (SGGDQ), Y84, 116–120 (YAIGG), T142, S148, Y245, and K260. Hydrogencarbonate is bound at residue 141–143 (QTG).

This sequence belongs to the enoyl-CoA hydratase/isomerase family. MenB subfamily. Hydrogencarbonate serves as cofactor.

The enzyme catalyses 2-succinylbenzoyl-CoA + H(+) = 1,4-dihydroxy-2-naphthoyl-CoA + H2O. It participates in quinol/quinone metabolism; 1,4-dihydroxy-2-naphthoate biosynthesis; 1,4-dihydroxy-2-naphthoate from chorismate: step 6/7. Its pathway is quinol/quinone metabolism; menaquinone biosynthesis. Functionally, converts o-succinylbenzoyl-CoA (OSB-CoA) to 1,4-dihydroxy-2-naphthoyl-CoA (DHNA-CoA). The polypeptide is 1,4-dihydroxy-2-naphthoyl-CoA synthase (Staphylococcus epidermidis (strain ATCC 35984 / DSM 28319 / BCRC 17069 / CCUG 31568 / BM 3577 / RP62A)).